Reading from the N-terminus, the 141-residue chain is Nucleoside triphosphatase NudI (141 aa).

One can recognise a Nudix hydrolase domain in the interval 1 to 141 (MRQRTIVCPL…RKTLRLKGLL (141 aa)). Positions 38–59 (GGVEPGERIEEALRREIREELG) match the Nudix box motif.

Belongs to the Nudix hydrolase family. NudI subfamily. As to quaternary structure, monomer. The cofactor is Mg(2+).

The enzyme catalyses a ribonucleoside 5'-triphosphate + H2O = a ribonucleoside 5'-phosphate + diphosphate + H(+). It carries out the reaction a 2'-deoxyribonucleoside 5'-triphosphate + H2O = a 2'-deoxyribonucleoside 5'-phosphate + diphosphate + H(+). The catalysed reaction is dUTP + H2O = dUMP + diphosphate + H(+). It catalyses the reaction dTTP + H2O = dTMP + diphosphate + H(+). The enzyme catalyses dCTP + H2O = dCMP + diphosphate + H(+). Catalyzes the hydrolysis of nucleoside triphosphates, with a preference for pyrimidine deoxynucleoside triphosphates (dUTP, dTTP and dCTP). In Escherichia coli O9:H4 (strain HS), this protein is Nucleoside triphosphatase NudI.